The chain runs to 244 residues: Dehydration-responsive element-binding protein 2E (244 aa).

The segment at Met1–Val25 is disordered. The Nuclear localization signal signature appears at Arg20 to Arg46. The segment at residues Arg69–Pro134 is a DNA-binding region (AP2/ERF).

This sequence belongs to the AP2/ERF transcription factor family. ERF subfamily. In terms of tissue distribution, expressed in xylem tissues, stigma, anthers and region where sepals and petals attach the peduncle.

The protein resides in the nucleus. Its function is as follows. Transcriptional activator that binds specifically to the DNA sequence 5'-[AG]CCGAC-3'. Binding to the C-repeat/DRE element mediates abscisic acid-inducible transcription. Involved in the regulation of plant development and tolerance to abiotic stresses. This chain is Dehydration-responsive element-binding protein 2E (DREB2E), found in Arabidopsis thaliana (Mouse-ear cress).